The sequence spans 156 residues: Protein L* (156 aa).

Its function is as follows. May be required for viral persistance in the host. In Theiler's murine encephalomyelitis virus (strain DA) (TMEV), this protein is Protein L*.